We begin with the raw amino-acid sequence, 83 residues long: MKASMFLALAGLVLLFVVGYASESEEKEFPRELLSKIFAVDDFKGEERGCKGFGDSCTPGKNECCPNYACSSKHKWCKVNLGK.

The first 21 residues, 1 to 21 (MKASMFLALAGLVLLFVVGYA), serve as a signal peptide directing secretion. Positions 22-48 (SESEEKEFPRELLSKIFAVDDFKGEER) are excised as a propeptide. 3 disulfides stabilise this stretch: Cys50/Cys65, Cys57/Cys70, and Cys64/Cys77. Position 81 is a leucine amide (Leu81).

This sequence belongs to the neurotoxin 10 (Hwtx-1) family. 15 (Hntx-3) subfamily. Monomer. Expressed by the venom gland.

It is found in the secreted. Functionally, lethal neurotoxin. Selectively blocks tetrodotoxin-sensitive voltage-gated sodium channels (Nav). Does not affect tetrodotoxin-resistant voltage-gated sodium channels or calcium channels. This is Mu-theraphotoxin-Hhn2i from Cyriopagopus hainanus (Chinese bird spider).